The primary structure comprises 200 residues: ADP-ribosylation factor-like protein 4D (200 aa).

Glycine 2 carries the N-myristoyl glycine lipid modification. GTP contacts are provided by residues 27-34 (GLDSAGKT), 75-79 (DVGGQ), and 134-137 (NKQD).

Belongs to the small GTPase superfamily. Arf family. As to quaternary structure, interacts with CYTH2; the interaction is direct and ARL4D GTP-dependent. Does not interact with ARL4D.

Its subcellular location is the nucleus. It localises to the nucleolus. The protein localises to the cell membrane. The protein resides in the cytoplasm. Small GTP-binding protein which cycles between an inactive GDP-bound and an active GTP-bound form, and the rate of cycling is regulated by guanine nucleotide exchange factors (GEF) and GTPase-activating proteins (GAP). GTP-binding protein that does not act as an allosteric activator of the cholera toxin catalytic subunit. Recruits CYTH1, CYTH2, CYTH3 and CYTH4 to the plasma membrane in GDP-bound form. This is ADP-ribosylation factor-like protein 4D (ARL4D) from Bos taurus (Bovine).